A 352-amino-acid polypeptide reads, in one-letter code: Protein Wnt-11 (352 aa).

Positions Met1 to Gly22 are cleaved as a signal peptide. 2 N-linked (GlcNAc...) asparagine glycosylation sites follow: Asn38 and Asn88. Cystine bridges form between Cys78/Cys89, Cys128/Cys136, Cys138/Cys155, Cys207/Cys221, and Cys209/Cys216. Ser213 carries O-palmitoleoyl serine; by PORCN lipidation. Residues Tyr273 and Tyr280 each carry the sulfotyrosine modification. Disulfide bonds link Cys281/Cys312, Cys297/Cys307, Cys311/Cys351, Cys327/Cys342, Cys329/Cys339, and Cys334/Cys335. N-linked (GlcNAc...) asparagine glycosylation occurs at Asn298.

It belongs to the Wnt family. In terms of processing, glycosylation is required for protein secretion. Palmitoleoylation is required for efficient binding to frizzled receptors. Depalmitoleoylation leads to Wnt signaling pathway inhibition. In embryos, expressed in the neural tube, dorsal somite, mesenchymal cells within the dorsal fin, branchial arches and heart muscle, becoming expressed throughout the myocardium by the tadpole stage (stage 45). Prior to neural crest cell migration, expressed in a domain flanking the neural crest on the medial or neural (the opposite side to wnt11b). Weakly expressed in the developing pronephros from stage 25, with expression increasing from stages 30 to 35.

It localises to the secreted. It is found in the extracellular space. The protein localises to the extracellular matrix. Its function is as follows. Ligand for members of the frizzled family of seven transmembrane receptors. Shares much functionality with wnt11b. Signals through a non-canonical Wnt pathway to activate Jun-N-terminal kinase (JNK) to regulate gastrulation movements. Acts in a non-cell-autonomous manner to control neural crest migration, probably acting as an extracellular signal from surrounding tissue, but is not required for neural crest induction. Acts redundantly with wnt11b during pronephros induction. Regulates cardiac morphogenesis through the activation of JNK, but is not required for cardiac differentiation. Essential for dorsal fin development; required for an epithelial to mesenchymal transformation event prior to migration of cells into the fin, and ultimately for maintenance of fin structure. Mediates dorsal fin development through a non-canonical pathway mediated by Ca(2+). This is Protein Wnt-11 from Xenopus laevis (African clawed frog).